Reading from the N-terminus, the 159-residue chain is MNRVLYPGTFDPITKGHGDLVERASRLFDHVIIAVAASPKKNPLFPLEQRVALAREVTKHLPNVEVIGFSSLLAHFAKEQGANVFLRGLRAVSDFEYEFQLANMNRQLAPDVESLFLTPSERYSFISSTLVREIAALGGDITKFVHPVVADALTERFKK.

A substrate-binding site is contributed by T9. ATP-binding positions include T9 to F10 and H17. The substrate site is built by K41, L73, and R87. ATP-binding positions include G88–R90, E98, and Y123–T129.

It belongs to the bacterial CoaD family. In terms of assembly, homohexamer. Mg(2+) is required as a cofactor.

The protein resides in the cytoplasm. It catalyses the reaction (R)-4'-phosphopantetheine + ATP + H(+) = 3'-dephospho-CoA + diphosphate. Its pathway is cofactor biosynthesis; coenzyme A biosynthesis; CoA from (R)-pantothenate: step 4/5. In terms of biological role, reversibly transfers an adenylyl group from ATP to 4'-phosphopantetheine, yielding dephospho-CoA (dPCoA) and pyrophosphate. In Pseudomonas putida (strain GB-1), this protein is Phosphopantetheine adenylyltransferase.